A 421-amino-acid chain; its full sequence is L-evernosamine nitrososynthase (421 aa).

Belongs to the acyl-CoA dehydrogenase family. In terms of assembly, homotetramer. The cofactor is FAD.

The catalysed reaction is dTDP-beta-L-evernosamine + 2 NADPH + 2 O2 + H(+) = dTDP-2,3,6-trideoxy-3-C-methyl-4-O-methyl-3-nitroso-beta-L-arabino-hexopyranose + 2 NADP(+) + 3 H2O. The enzyme catalyses dTDP-beta-L-evernosamine + NADPH + O2 = dTDP-N-hydroxy-beta-L-evernosamine + NADP(+) + H2O. It catalyses the reaction dTDP-N-hydroxy-beta-L-evernosamine + NADPH + O2 + H(+) = dTDP-2,3,6-trideoxy-3-C-methyl-4-O-methyl-3-nitroso-beta-L-arabino-hexopyranose + NADP(+) + 2 H2O. The protein operates within antibiotic biosynthesis. In terms of biological role, nitrososynthase involved in the biosynthesis of everninomicin, a broad spectrum orthosomycin antibiotic. Catalyzes the double-oxidation of TDP-L-evernosamine to TDP-L-evernitrosose. The enzyme first oxidizes the substrate to a transient hydroxylamino intermediate, which is then further oxidized to nitroso sugar. The nitroso group is probably spontaneously oxidized giving TDP-L-evernitrose. In vitro, catalyzes the double-oxidation of TDP-L-epi-vancosamine to TDP-L-epi-vancosonitrose. Can also use biosynthetic progenitors of TDP-L-epi-vancosamine, but progenitors solely undergo single-oxidation reactions and terminate in the hydroxylamine oxidation state. The protein is L-evernosamine nitrososynthase of Micromonospora sp. (strain ATCC 39149 / NRRL 15099 / SCC 1413).